Here is a 202-residue protein sequence, read N- to C-terminus: MPGVWSPPCPTTPRVGVVAALVAATLTGCGSGDSTVAKTPEATPSLSTAHPAPPSSEPSPPSATAAPPSNHSAAPVDPCAVNLASPTIAKVVSELPRDPRSEQPWNPEPLAGNYNECAQLSAVVIKANTNAGNPTTRAVMFHLGKYIPQGVPDTYGFTGIDTSQCTGDTVALTYASGIGLNNVVKFRWNGGGVELIGNTTGG.

The signal sequence occupies residues 1-28 (MPGVWSPPCPTTPRVGVVAALVAATLTG). A lipid anchor (N-palmitoyl cysteine) is attached at C29. The S-diacylglycerol cysteine moiety is linked to residue C29. The tract at residues 29–78 (CGSGDSTVAKTPEATPSLSTAHPAPPSSEPSPPSATAAPPSNHSAAPVDP) is disordered. A compositionally biased stretch (polar residues) spans 32-46 (GDSTVAKTPEATPSL). The segment covering 51–61 (PAPPSSEPSPP) has biased composition (pro residues). A compositionally biased stretch (low complexity) spans 62–75 (SATAAPPSNHSAAP).

The protein resides in the cell membrane. The chain is Putative lipoprotein LprE (lprE) from Mycobacterium tuberculosis (strain CDC 1551 / Oshkosh).